The following is a 326-amino-acid chain: Phenylalanine--tRNA ligase alpha subunit (326 aa).

Residue glutamate 251 coordinates Mg(2+).

The protein belongs to the class-II aminoacyl-tRNA synthetase family. Phe-tRNA synthetase alpha subunit type 1 subfamily. As to quaternary structure, tetramer of two alpha and two beta subunits. It depends on Mg(2+) as a cofactor.

It localises to the cytoplasm. The enzyme catalyses tRNA(Phe) + L-phenylalanine + ATP = L-phenylalanyl-tRNA(Phe) + AMP + diphosphate + H(+). The chain is Phenylalanine--tRNA ligase alpha subunit from Alteromonas mediterranea (strain DSM 17117 / CIP 110805 / LMG 28347 / Deep ecotype).